Reading from the N-terminus, the 1072-residue chain is DNA-directed RNA polymerase subunit beta (1072 aa).

Belongs to the RNA polymerase beta chain family. As to quaternary structure, in plastids the minimal PEP RNA polymerase catalytic core is composed of four subunits: alpha, beta, beta', and beta''. When a (nuclear-encoded) sigma factor is associated with the core the holoenzyme is formed, which can initiate transcription.

It is found in the plastid. The protein localises to the chloroplast. The enzyme catalyses RNA(n) + a ribonucleoside 5'-triphosphate = RNA(n+1) + diphosphate. In terms of biological role, DNA-dependent RNA polymerase catalyzes the transcription of DNA into RNA using the four ribonucleoside triphosphates as substrates. The sequence is that of DNA-directed RNA polymerase subunit beta from Lepidium virginicum (Virginia pepperweed).